A 594-amino-acid polypeptide reads, in one-letter code: Protein FAM200C (594 aa).

The protein is Protein FAM200C of Homo sapiens (Human).